We begin with the raw amino-acid sequence, 921 residues long: MEYKNTLLMPKTEFPMRGNLPKREPAMQEKWAEMNIYEKVQEHTKGRPLFVLHDGPPYANGDIHMGHALNKVLKDFIVRYKSMTGFCAPYVPGWDTHGLPIEQALTNKGVKRKEMTVAEFRKLCAEYAYEQVERQREQFKRLGVRADWDNPYITLEPAYEAQQIKVFGDMAKKGYIYKGQKPVYWSPTSESALAEAEIEYQDKKSASIYVAFPVKDGKNVLEGDEKYIIWTTTPWTLPANLGISVHPELEYAIVKVNDEKYIIASELFETVAKTLEWENAEVVKTVKGSELEYTVAKHPFYDRDSLVMLGDHVTTDAGTGCVHTAPGHGEDDFVVGKKYGLEVLCPVDDKGVLTEEAPGFEGLFYDKANKPITEKLEEVGALLKLTFITHSYPHDWRTKKPIIFRATAQWFASIEAFRKELLEAVAETKWVPAWGETRLHNMVRDRGDWCISRQRAWGVPIPVFYAENGDPIITDETINHVADLFREHGSNVWFEREAKDLLPEGFTHPGSPNGEFRKETDIMDVWFDSGSSHQAVLEERDDLQRPADLYLEGSDQYRGWFNSSLSTAVAVTGKAPYKGVLSHGFVLDGEGRKMSKSIGNIVVPKKIMDQLGGDILRLWVSSVDYQSDVRISDDILKQVAEVYRKIRNTFRFLLGNLDDFKPSENTVAVAELREVDRYMLVKLNDLITKVKEAYETYDFAAVYHAIHNFCTIDLSSFYLDFAKDILYIEGANHEDRRAIQTVLYDVLVALTKLVTPILPHTADEVWPYIPGVTEESVQLTDMPEAVQLDDAEALKTKWDAFMTLRDDVLKALEVARNEKVIGKSLNASITLYPTAEMKTMLESINEDLKQLFIVSEYKLGGMMEEAPADAPKYEHTAVVVAQATGETCERCWVVSETIGKDAEHETLCERCATVVKENYVK.

The 'HIGH' region motif lies at 57–67 (PYANGDIHMGH). Residue glutamate 552 participates in L-isoleucyl-5'-AMP binding. The 'KMSKS' region signature appears at 593 to 597 (KMSKS). Lysine 596 serves as a coordination point for ATP. Zn(2+) is bound by residues cysteine 888, cysteine 891, cysteine 908, and cysteine 911.

Belongs to the class-I aminoacyl-tRNA synthetase family. IleS type 1 subfamily. In terms of assembly, monomer. Zn(2+) is required as a cofactor.

Its subcellular location is the cytoplasm. It catalyses the reaction tRNA(Ile) + L-isoleucine + ATP = L-isoleucyl-tRNA(Ile) + AMP + diphosphate. Catalyzes the attachment of isoleucine to tRNA(Ile). As IleRS can inadvertently accommodate and process structurally similar amino acids such as valine, to avoid such errors it has two additional distinct tRNA(Ile)-dependent editing activities. One activity is designated as 'pretransfer' editing and involves the hydrolysis of activated Val-AMP. The other activity is designated 'posttransfer' editing and involves deacylation of mischarged Val-tRNA(Ile). The polypeptide is Isoleucine--tRNA ligase (Bacillus cereus (strain 03BB102)).